The primary structure comprises 115 residues: Promotilin (115 aa).

The first 25 residues, 1 to 25 (MVSRKAVAALLVVHAPAMLASQTEA), serve as a signal peptide directing secretion. Residues 40–74 (EKERSKGQKKSLSVWQRSGEEGPVDPAEPIEEEGN) are disordered.

The protein belongs to the motilin family.

The protein localises to the secreted. Its function is as follows. Plays an important role in the regulation of interdigestive gastrointestinal motility and indirectly causes rhythmic contraction of duodenal and colonic smooth muscle. This chain is Promotilin (MLN), found in Macaca mulatta (Rhesus macaque).